Consider the following 268-residue polypeptide: 4-hydroxy-tetrahydrodipicolinate reductase (268 aa).

NAD(+) is bound by residues 8-13 (GGGGKM) and Glu34. Lys35 is a binding site for NADP(+). Residues 98 to 100 (GST) and 122 to 125 (APNM) each bind NAD(+). Residue His155 is the Proton donor/acceptor of the active site. A (S)-2,3,4,5-tetrahydrodipicolinate-binding site is contributed by His156. Lys159 functions as the Proton donor in the catalytic mechanism. Position 165 to 166 (165 to 166 (GT)) interacts with (S)-2,3,4,5-tetrahydrodipicolinate.

The protein belongs to the DapB family.

It localises to the cytoplasm. It catalyses the reaction (S)-2,3,4,5-tetrahydrodipicolinate + NAD(+) + H2O = (2S,4S)-4-hydroxy-2,3,4,5-tetrahydrodipicolinate + NADH + H(+). It carries out the reaction (S)-2,3,4,5-tetrahydrodipicolinate + NADP(+) + H2O = (2S,4S)-4-hydroxy-2,3,4,5-tetrahydrodipicolinate + NADPH + H(+). Its pathway is amino-acid biosynthesis; L-lysine biosynthesis via DAP pathway; (S)-tetrahydrodipicolinate from L-aspartate: step 4/4. In terms of biological role, catalyzes the conversion of 4-hydroxy-tetrahydrodipicolinate (HTPA) to tetrahydrodipicolinate. The chain is 4-hydroxy-tetrahydrodipicolinate reductase from Syntrophus aciditrophicus (strain SB).